A 351-amino-acid polypeptide reads, in one-letter code: UDP-N-acetylglucosamine--N-acetylmuramyl-(pentapeptide) pyrophosphoryl-undecaprenol N-acetylglucosamine transferase (351 aa).

Residues T12 to G14, N124, R160, S188, I239, A258 to E263, and Q283 each bind UDP-N-acetyl-alpha-D-glucosamine.

This sequence belongs to the glycosyltransferase 28 family. MurG subfamily.

The protein resides in the cell inner membrane. The enzyme catalyses di-trans,octa-cis-undecaprenyl diphospho-N-acetyl-alpha-D-muramoyl-L-alanyl-D-glutamyl-meso-2,6-diaminopimeloyl-D-alanyl-D-alanine + UDP-N-acetyl-alpha-D-glucosamine = di-trans,octa-cis-undecaprenyl diphospho-[N-acetyl-alpha-D-glucosaminyl-(1-&gt;4)]-N-acetyl-alpha-D-muramoyl-L-alanyl-D-glutamyl-meso-2,6-diaminopimeloyl-D-alanyl-D-alanine + UDP + H(+). It participates in cell wall biogenesis; peptidoglycan biosynthesis. In terms of biological role, cell wall formation. Catalyzes the transfer of a GlcNAc subunit on undecaprenyl-pyrophosphoryl-MurNAc-pentapeptide (lipid intermediate I) to form undecaprenyl-pyrophosphoryl-MurNAc-(pentapeptide)GlcNAc (lipid intermediate II). In Actinobacillus pleuropneumoniae serotype 5b (strain L20), this protein is UDP-N-acetylglucosamine--N-acetylmuramyl-(pentapeptide) pyrophosphoryl-undecaprenol N-acetylglucosamine transferase.